The chain runs to 353 residues: MSFDAEKQLAIAAVRRASYLTEKVFNQLIKEKSAAGALTKDDKSPVTIGDFGAQAIVISMLKDAFPNDPIVGEEDSDFLRENTQTCSRVWELVQETIQHATEYKELGQIKSAEEMMSIIDQGSYHGGRNGRMWTLDPIDGTKGFLRGAQYAICLALIENGKPVVSAIGCPNLPYDFNQPETSPKGIIMSAVRNHGCFQYSLHNEKLEPVQVHMQDVQNTKDSKFCEGVEAGHSMQGTQEEIAKYLGITRGPTKMDSQAKYASLARGDGDIYLRLPTKMTFEEKIWDHAGGSLLVEEAGGVVSDMFGKPLDFGVGRTLKNNNGVIAAYKGIFEKVIEATAAVTSKDPHFQKVAQ.

Residue Asp-50 is the Proton acceptor of the active site. Mg(2+) is bound by residues Glu-73, Asp-136, Ile-138, and Asp-139. Thr-141 functions as the Proton acceptor in the catalytic mechanism. Positions 141, 232, 256, 259, 273, and 286 each coordinate adenosine 3',5'-bisphosphate. AMP-binding residues include His-232, Ser-256, Lys-259, Arg-273, and Asp-286. Position 286 (Asp-286) interacts with Mg(2+).

The protein belongs to the inositol monophosphatase superfamily. Mg(2+) serves as cofactor.

It carries out the reaction 3'-phosphoadenylyl sulfate + H2O = adenosine 5'-phosphosulfate + phosphate. The enzyme catalyses adenosine 3',5'-bisphosphate + H2O = AMP + phosphate. It catalyses the reaction adenosine 2',5'-bisphosphate + H2O = AMP + phosphate. The catalysed reaction is 1D-myo-inositol 1,4-bisphosphate + H2O = 1D-myo-inositol 4-phosphate + phosphate. It carries out the reaction 1D-myo-inositol 1,3,4-trisphosphate + H2O = 1D-myo-inositol 3,4-bisphosphate + phosphate. Inhibited by Li(+) and Na(+). Phosphatase that converts adenosine 3'-phosphate 5'-phosphosulfate (PAPS) to adenosine 5'-phosphosulfate (APS) and 3'(2')-phosphoadenosine 5'-phosphate (PAP) to AMP. May regulate the flux of sulfur in the sulfur-activation pathway by converting PAPS to APS. Is also able to hydrolyze inositol 1,4-bisphosphate (Ins(1,4)P2) and inositol 1,3,4-trisphosphate (Ins(1,3,4)P3), but is not active on inositol 1,4,5-trisphosphate, inositol 1-phosphate, fructose 1,6-bisphosphate, AMP and ATP. Functionally, confers resistance to lithium. In Schizosaccharomyces pombe (strain 972 / ATCC 24843) (Fission yeast), this protein is 3'(2'),5'-bisphosphate nucleotidase (tol1).